A 556-amino-acid polypeptide reads, in one-letter code: Probable zinc metalloprotease EGY2, chloroplastic (556 aa).

The N-terminal 64 residues, 1 to 64 (MNLAVASFRG…VFRKRETLVR (64 aa)), are a transit peptide targeting the chloroplast. The segment at 63–133 (VRVTETQTEP…DGDKLEVSSG (71 aa)) is disordered. 7 helical membrane passes run 267–287 (AVPEWFAAGSFGLVALFTLFL), 311–331 (LPGALVTALVLGVHELGHILV), 336–356 (GIKLGVPFFVPSWQIGSFGAI), 374–394 (AAGPLAGFSLGLILFLIGLFV), 437–457 (PLVIWAWAGLLINGINSIPAG), 484–504 (LLGLSALFSDVAFYWVVLIFF), and 527–547 (LGILVLFLSLLVCLPYPFAFT).

This sequence belongs to the peptidase M50B family.

The protein localises to the plastid. It is found in the chloroplast membrane. Its function is as follows. Probable membrane-associated metalloprotease that may be involved in chloroplast development. In Arabidopsis thaliana (Mouse-ear cress), this protein is Probable zinc metalloprotease EGY2, chloroplastic (EGY2).